The following is a 514-amino-acid chain: MAGLYSSSSSSKPTLSSSPSSSSSSRLFLLVTLLPLSLACFAFVLQWRGGLDDPVTHWSIDHHEFPGMVTTQEKRSLRRSVSDSGCVDLLGQSRSPSFPYFRNWKFDYHSDLKPRICITTSTSAGLEQTLPWIYFHKVIGVSTFYLFVEGKAASPNVSRVLETIPGVKVIYRTKELEEKQAKSRIWNETWLSSFFYKPCNYELFVKQSLNMEMAITMAQDAGMEWIIHLDTDELIHPSGTHEYSLRKLLGNISADVDVVIFPNYESSVERDDIREPFSEVSMFKKNFDHLLRDVYFGNYKDATRGNPNYFLTYGNGKAAARVQDHLRPNGAHRWHNYRKSPNEVKLEEAAVLHYTYPRFSDLTSRRDRCGCKPTKVDVKRCFMLEFDRAAFIIASTASSEEMLQWYREHVVWTDEKLKLKLLRKGILTRIYAPMVIIQELREAGVFSSVVIAAHKSPSKNSSTADSTSGITRESSQETGKRRVLEFHLDVDGESQASAVPPQSPPGLEATQMEL.

Residues 1–23 (MAGLYSSSSSSKPTLSSSPSSSS) are disordered. The signal sequence occupies residues 1–39 (MAGLYSSSSSSKPTLSSSPSSSSSSRLFLLVTLLPLSLA). N-linked (GlcNAc...) asparagine glycans are attached at residues Asn156, Asn187, Asn251, and Asn460. The tract at residues 457–514 (PSKNSSTADSTSGITRESSQETGKRRVLEFHLDVDGESQASAVPPQSPPGLEATQMEL) is disordered. Residues 458–473 (SKNSSTADSTSGITRE) show a composition bias toward polar residues. A compositionally biased stretch (basic and acidic residues) spans 474–490 (SSQETGKRRVLEFHLDV).

It belongs to the glycosyltransferase 25 family.

Its subcellular location is the secreted. The protein resides in the cell wall. It is found in the cytoplasm. It localises to the cell membrane. Involved in the coordination between cell elongation and cellulose synthesis by promoting the expression of genes involved in cell elongation and cellulose synthesis. Acts as a regulator of plasmodesmatal permeability. Maybe a glycosyltransferase. This is Glycosyltransferase-like At3g57200 from Arabidopsis thaliana (Mouse-ear cress).